A 101-amino-acid chain; its full sequence is Urease subunit beta (101 aa).

The protein belongs to the urease beta subunit family. In terms of assembly, heterotrimer of UreA (gamma), UreB (beta) and UreC (alpha) subunits. Three heterotrimers associate to form the active enzyme.

The protein resides in the cytoplasm. The enzyme catalyses urea + 2 H2O + H(+) = hydrogencarbonate + 2 NH4(+). The protein operates within nitrogen metabolism; urea degradation; CO(2) and NH(3) from urea (urease route): step 1/1. The polypeptide is Urease subunit beta (Cupriavidus necator (strain ATCC 17699 / DSM 428 / KCTC 22496 / NCIMB 10442 / H16 / Stanier 337) (Ralstonia eutropha)).